The following is a 691-amino-acid chain: Pentatricopeptide repeat-containing protein ATP4, chloroplastic (691 aa).

Low complexity predominate over residues 1–17 (MASLPLCRSPSSLLPSW). Residues 1 to 35 (MASLPLCRSPSSLLPSWPHRPISASFNPKNPSSPV) constitute a chloroplast transit peptide. The interval 1–76 (MASLPLCRSP…SSNTRFLWVN (76 aa)) is disordered. The segment covering 24–33 (ASFNPKNPSS) has biased composition (polar residues). Residues 45 to 56 (PPQPQDPSPPSD) show a composition bias toward pro residues. Positions 61 to 76 (GTRPSSSSNTRFLWVN) are enriched in polar residues. PPR repeat units lie at residues 163-197 (KVILYNVVLKLLRKKRLWSETEALWAEMLRDGVQP), 198-232 (DNATFSTVISCARACGLHSKAVEWFDKMPEFGCSP), 233-267 (DMLTYSAVIDAYGHAGNSEAALRLYDRARAEKWQL), 268-302 (DPVICSTVIKVHSTSGNFDGALNVFEEMKAIGVRP), 303-337 (NLVVYNTMLDAMGRALRPWVVKTIHREMVDQQVQP), 338-372 (SRATYCCLLHAYTRARYGEDAMAVYRLMKDEAMGI), 373-403 (DVMLYNMLLSMCADIGYVDEAEEIFRDMKAS), 411-445 (DSWSYSSMVTLYSSTANVLSAEGILNEMVEAGFKP), 446-480 (NIFVLTSLIRCYGKVGRTDDVVRSFGMLQDLGIIP), and 546-580 (KMPYCNCLMDLCVNLNQMEKACALLDAAQQLGIYA). The region spanning 592-677 (LHLRGLSVGA…WFLTTNVAAK (86 aa)) is the Smr domain.

It belongs to the PPR family. P subfamily.

It localises to the plastid. The protein localises to the chloroplast stroma. Functionally, involved in translation and accumulation of chloroplast ATP synthase subunits. Interacts with the 5'-UTR of the chloroplast bicistronic atpB and atpE mRNA and activates its translation by facilitating ribosome association with the mRNA. Required for accumulation and activity of the chloroplast ATP synthase. Enhances atpA translation and is required for accumulation of specific processed atpF and psaJ transcripts. Required for the stabilization of bicistronic rpl16 and rpl14 mRNAs. The chain is Pentatricopeptide repeat-containing protein ATP4, chloroplastic from Zea mays (Maize).